The sequence spans 212 residues: CRIB domain-containing protein RIC6 (212 aa).

One can recognise a CRIB domain in the interval 34–47 (IGNPTDVKHVAHIG). The disordered stretch occupies residues 51–212 (PSANATAPSW…MPQFDNRDDF (162 aa)). Polar residues predominate over residues 53 to 65 (ANATAPSWMTEFN). Basic and acidic residues predominate over residues 106 to 121 (AASEKGSPTKDKSSDK). Residues 192-202 (EYMSETGSVRS) are compositionally biased toward polar residues.

Interacts with ARAC11/ROP1. In terms of tissue distribution, expressed in flowers and pollen.

It localises to the cell membrane. Functions as a downstream effector of Rho-related GTP binding proteins of the 'Rho of Plants' (ROPs) family. Participates in the propagation of ROP GTPase signals in specific cellular responses. Is involved in pollen tube growth regulation through its interaction with ARAC11/ROP1. In Arabidopsis thaliana (Mouse-ear cress), this protein is CRIB domain-containing protein RIC6 (RIC6).